Here is a 31-residue protein sequence, read N- to C-terminus: Photosystem II reaction center protein T (31 aa).

A helical transmembrane segment spans residues 3–23 (AFTYTLLMTLGVVTLFFAVAF).

The protein belongs to the PsbT family. In terms of assembly, PSII is composed of 1 copy each of membrane proteins PsbA, PsbB, PsbC, PsbD, PsbE, PsbF, PsbH, PsbI, PsbJ, PsbK, PsbL, PsbM, PsbT, PsbX, PsbY, Psb30/Ycf12, peripheral proteins PsbO, CyanoQ (PsbQ), PsbU, PsbV and a large number of cofactors. It forms dimeric complexes.

It is found in the cellular thylakoid membrane. Functionally, found at the monomer-monomer interface of the photosystem II (PS II) dimer, plays a role in assembly and dimerization of PSII. PSII is a light-driven water plastoquinone oxidoreductase, using light energy to abstract electrons from H(2)O, generating a proton gradient subsequently used for ATP formation. This Prochlorococcus marinus (strain SARG / CCMP1375 / SS120) protein is Photosystem II reaction center protein T.